A 398-amino-acid chain; its full sequence is Meiotically up-regulated gene 126 protein (398 aa).

2 disordered regions span residues 30 to 81 (EEME…QRHR) and 119 to 260 (FESD…NSNS). 2 stretches are compositionally biased toward polar residues: residues 119–135 (FESD…NFPT) and 183–199 (VQEN…QEPQ). Positions 210–222 (QANQQETSSNQEE) are enriched in low complexity. Residues 224-236 (SFDRQETQDDKQK) show a composition bias toward basic and acidic residues. The span at 248–260 (RNRNQATITNSNS) shows a compositional bias: polar residues. A run of 4 helical transmembrane segments spans residues 269–289 (IFVI…DLIE), 305–325 (IFLW…YLAL), 341–361 (GACF…CFLI), and 373–393 (LEIY…GAIY).

The protein localises to the membrane. Functionally, has a role in meiosis. In Schizosaccharomyces pombe (strain 972 / ATCC 24843) (Fission yeast), this protein is Meiotically up-regulated gene 126 protein (mug126).